Reading from the N-terminus, the 443-residue chain is EGF-containing fibulin-like extracellular matrix protein 2 (443 aa).

Positions 1–23 (MLPCASCLPGSLLLWALLLLLLG) are cleaved as a signal peptide. The EGF-like 1; atypical domain occupies 36–81 (YTECTDGYEWDPDSQHCRDVNECLTIPEACKGEMKCINHYGGYLCL). Intrachain disulfides connect cysteine 58–cysteine 121, cysteine 65–cysteine 80, cysteine 71–cysteine 109, cysteine 127–cysteine 140, cysteine 134–cysteine 149, cysteine 151–cysteine 162, cysteine 168–cysteine 177, cysteine 173–cysteine 186, cysteine 188–cysteine 201, cysteine 207–cysteine 217, cysteine 213–cysteine 226, cysteine 228–cysteine 241, cysteine 247–cysteine 258, cysteine 254–cysteine 267, cysteine 269–cysteine 281, cysteine 287–cysteine 300, cysteine 294–cysteine 309, and cysteine 315–cysteine 327. Residues 123 to 163 (DVDECAQALHDCRPSQDCHNLPGSYQCTCPDGYRKIGPECV) form the EGF-like 2; calcium-binding domain. An EGF-like 3; calcium-binding domain is found at 164-202 (DIDECRYRYCQHRCVNLPGSFRCQCEPGFQLGPNNRSCV). Asparagine 198 carries an N-linked (GlcNAc...) asparagine glycan. In terms of domain architecture, EGF-like 4; calcium-binding spans 203-242 (DVNECDMGAPCEQRCFNSYGTFLCRCHQGYELHRDGFSCS). One can recognise an EGF-like 5; calcium-binding domain in the interval 243-282 (DIDECSYSSYLCQYRCINEPGRFSCHCPQGYQLLATRLCQ). Residues 283–328 (DIDECESGAHQCSEAQTCVNFHGGYRCVDTNRCVEPYIQVSENRCL) form the EGF-like 6; calcium-binding domain. Residue asparagine 394 is glycosylated (N-linked (GlcNAc...) asparagine).

The protein belongs to the fibulin family. Homodimer; disulfide-linked. Multimer; allows heparin binding. Monomer. Interacts with FBN1 (via N-terminal domain); this interaction inhibits EFEMP2 binding to LOX and ELN. Interacts with LOX (via propeptide); this interaction is strong and facilitates formation of ternary complexes with ELN during elastic fiber assembly; this interaction limits interaction of EFEMP2 with FBLN5. Interacts with PITX2. Interacts with ELN with moderate affinity; this interaction regulates ELN self-assembly maturation stage. Interacts with FBLN5 with moderate affinity. Interacts with LOXL1 (via propeptide), LTBP1 and TGFB1 stronger than with LOXL2 and LTBP3. Interacts with PCOLCE. Interacts with collagen type IV trimer (COL4A1-COL4A1-COL4A2), NID2 and moderately with COL15A1-derived endostatin. Interacts with EMILIN1; this interaction promotes the incorporation of EFEMP2 into the extracellular matrix. Interacts with LTBP4; the LTBP4 long form (LTBP4L) has a stronger binding affinity than the LTBP4 short form and the LTBP4 long form promotes fibrillar deposition of EFEMP2. N-glycosylated; contains mostly complex-type glycans. Not O-glycosylated. Post-translationally, cleaved by ELANE; produces a 50-55 kDa fragment. Cleaved by MMP2 and MMP9; produces several fragments.

It localises to the secreted. It is found in the extracellular space. The protein resides in the extracellular matrix. Its subcellular location is the basement membrane. Its function is as follows. Plays a crucial role in elastic fiber formation in tissue, and in the formation of ultrastructural connections between elastic laminae and smooth muscle cells in the aorta, therefore participates in terminal differentiation and maturation of smooth muscle cell (SMC) and in the mechanical properties and wall integrity maintenance of the aorta. In addition, is involved in the control of collagen fibril assembly in tissue throught proteolytic activation of LOX leading to cross- linking of collagen and elastin. Also promotes ELN coacervation and participates in the deposition of ELN coacervates on to microfibrils but also regulates ELN cross- linking through LOX interaction. Moreover adheres to the cells through heparin binding in a calcium-dependent manner and regulates vascularlar smooth muscle cells proliferation through angiotensin signaling. The protein is EGF-containing fibulin-like extracellular matrix protein 2 of Homo sapiens (Human).